A 146-amino-acid chain; its full sequence is uncharacterized protein (146 aa).

The signal sequence occupies residues methionine 1–alanine 17. 2 disordered regions span residues asparagine 27–leucine 54 and glutamate 70–proline 146. Residues glutamine 32–leucine 54 are compositionally biased toward low complexity. Residues serine 77 to histidine 118 are compositionally biased toward polar residues.

This is an uncharacterized protein from Escherichia coli (strain K12).